The chain runs to 650 residues: DNA gyrase subunit B (650 aa).

The region spanning 429–543 (NELFIVEGDS…AGYVYIAQPP (115 aa)) is the Toprim domain. Residues Glu435, Asp508, and Asp510 each contribute to the Mg(2+) site.

It belongs to the type II topoisomerase GyrB family. Heterotetramer, composed of two GyrA and two GyrB chains. In the heterotetramer, GyrA contains the active site tyrosine that forms a transient covalent intermediate with DNA, while GyrB binds cofactors and catalyzes ATP hydrolysis. It depends on Mg(2+) as a cofactor. Requires Mn(2+) as cofactor. The cofactor is Ca(2+).

It localises to the cytoplasm. It carries out the reaction ATP-dependent breakage, passage and rejoining of double-stranded DNA.. A type II topoisomerase that negatively supercoils closed circular double-stranded (ds) DNA in an ATP-dependent manner to modulate DNA topology and maintain chromosomes in an underwound state. Negative supercoiling favors strand separation, and DNA replication, transcription, recombination and repair, all of which involve strand separation. Also able to catalyze the interconversion of other topological isomers of dsDNA rings, including catenanes and knotted rings. Type II topoisomerases break and join 2 DNA strands simultaneously in an ATP-dependent manner. The polypeptide is DNA gyrase subunit B (Streptococcus pyogenes serotype M1).